Reading from the N-terminus, the 1023-residue chain is RTX-I toxin determinant A from serotypes 1/9 (1023 aa).

A run of 3 helical transmembrane segments spans residues 226–256, 297–326, and 367–406; these read NNLP…ILSN, STTA…ADKF, and INSV…SGIL. Hemolysin-type calcium-binding repeat units lie at residues 730–747, 748–765, 766–783, 784–801, 812–829, and 830–847; these read FGSR…DDEI, YGND…NDVI, HGGD…NDRL, IGGK…DDEL, LGGA…TNLF, and DGGV…KDIY.

The protein belongs to the RTX prokaryotic toxin (TC 1.C.11) family. Palmitoylated by ApxIC. The toxin only becomes active when modified.

Its subcellular location is the secreted. The protein localises to the host cell membrane. Its function is as follows. One of the virulence factors of A.pleuropneumoniae, which has a strong hemolytic activity and is cytotoxic for alveolar macrophages and neutrophils. This is RTX-I toxin determinant A from serotypes 1/9 (apxIA) from Actinobacillus pleuropneumoniae (Haemophilus pleuropneumoniae).